The following is a 232-amino-acid chain: Vesicle transport through interaction with t-SNAREs homolog 1B (232 aa).

Residue Ala-2 is modified to N-acetylalanine. 2 interaction with CLINT1 regions span residues 2-23 (ASSA…GLHE) and 69-73 (APLSF). Residues 2–208 (ASSAASSEHF…SRKVTTNKLL (207 aa)) lie on the Cytoplasmic side of the membrane. A coiled-coil region spans residues 35 to 98 (TAGTEEKKKL…AKLHREVRST (64 aa)). The residue at position 103 (Thr-103) is a Phosphothreonine. Arg-107 bears the Omega-N-methylarginine mark. A Phosphoserine modification is found at Ser-138. Positions 161-198 (SEIIEELGEQRDQLERTKSRLVNTSENLSKSRKILRSM) form a coiled coil. The helical; Anchor for type IV membrane protein transmembrane segment at 209–229 (LSIIILLELAILGGLVYYKFF) threads the bilayer. Residues 230 to 232 (RSH) are Vesicular-facing.

It belongs to the VTI1 family. Forms a SNARE complex with STX7, STX8 and VAMP8 which functions in the homotypic fusion of late endosomes. Component of the SNARE complex composed of STX7, STX8, VAMP7 and VIT1B that is required for heterotypic fusion of late endosomes with lysosomes. May interact with STX17. Interacts with CLINT1. Expressed in all tissues examined.

The protein localises to the early endosome membrane. Its subcellular location is the late endosome membrane. The protein resides in the lysosome membrane. It is found in the cytoplasmic granule. It localises to the recycling endosome membrane. V-SNARE that mediates vesicle transport pathways through interactions with t-SNAREs on the target membrane. These interactions are proposed to mediate aspects of the specificity of vesicle trafficking and to promote fusion of the lipid bilayers. May be concerned with increased secretion of cytokines associated with cellular senescence. This chain is Vesicle transport through interaction with t-SNAREs homolog 1B (VTI1B), found in Homo sapiens (Human).